The chain runs to 489 residues: Tandem C2 domains nuclear protein (489 aa).

Phosphoserine is present on residues Ser82, Ser155, Ser167, Ser173, and Ser210. The disordered stretch occupies residues 189-214; it reads DSFSSVPSSSSSRKNSQGSNRSLDTI. A compositionally biased stretch (low complexity) spans 191–210; the sequence is FSSVPSSSSSRKNSQGSNRS. Thr213 and Thr215 each carry phosphothreonine. Position 217 is a phosphoserine (Ser217). C2 domains are found at residues 222–341 and 343–470; these read DLGR…SLEI and APSK…NQWK. Residues 446-448 carry the Nuclear localization signal motif; the sequence is RRK.

Its subcellular location is the nucleus. The protein is Tandem C2 domains nuclear protein (Tc2n) of Mus musculus (Mouse).